The chain runs to 302 residues: MFPHKKNDPLKSLPISRVGSSQRLNQHISSIPSTPNYVASSLNPVRNLPVSSGSIKSKITTKAALDKFEQLPIVKQVGAFEDTLNAISDNISQFKEGQLHANVEKIIAINDDLKSKIEELDRHRRLGENIKELEAESSNLDNTSKYILKELISYRNELRALPRLPASASKGSGDTVEIEDILKYAMKLAKFTKAPATSASMPFQIHPNNYVWPAEDALRRGMLAASSLNPDEIIANELGTTEEEKIQEKKDEQVKKADKQQDTGIRRGSFGDYGSSSSGKKKEEQSAQLDLDLFDSEDEFSD.

Positions 98–145 form a coiled coil; it reads QLHANVEKIIAINDDLKSKIEELDRHRRLGENIKELEAESSNLDNTSK. The interval 239–302 is disordered; the sequence is GTTEEEKIQE…LFDSEDEFSD (64 aa). The segment covering 242-265 has biased composition (basic and acidic residues); the sequence is EEEKIQEKKDEQVKKADKQQDTGI. The segment covering 268-278 has biased composition (low complexity); it reads GSFGDYGSSSS. Acidic residues predominate over residues 292 to 302; sequence DLFDSEDEFSD.

It belongs to the Mediator complex subunit 4 family. In terms of assembly, component of the Mediator complex.

Its subcellular location is the nucleus. Its function is as follows. Component of the Mediator complex, a coactivator involved in the regulated transcription of nearly all RNA polymerase II-dependent genes. Mediator functions as a bridge to convey information from gene-specific regulatory proteins to the basal RNA polymerase II transcription machinery. Mediator is recruited to promoters by direct interactions with regulatory proteins and serves as a scaffold for the assembly of a functional preinitiation complex with RNA polymerase II and the general transcription factors. This chain is Mediator of RNA polymerase II transcription subunit 4 (MED4), found in Scheffersomyces stipitis (strain ATCC 58785 / CBS 6054 / NBRC 10063 / NRRL Y-11545) (Yeast).